The chain runs to 137 residues: Holo-[acyl-carrier-protein] synthase (137 aa).

Mg(2+) is bound by residues Asp8 and Glu61.

The protein belongs to the P-Pant transferase superfamily. AcpS family. The cofactor is Mg(2+).

It localises to the cytoplasm. The enzyme catalyses apo-[ACP] + CoA = holo-[ACP] + adenosine 3',5'-bisphosphate + H(+). In terms of biological role, transfers the 4'-phosphopantetheine moiety from coenzyme A to a Ser of acyl-carrier-protein. This Afipia carboxidovorans (strain ATCC 49405 / DSM 1227 / KCTC 32145 / OM5) (Oligotropha carboxidovorans) protein is Holo-[acyl-carrier-protein] synthase.